A 277-amino-acid chain; its full sequence is MNTDARMGAGVSLKAEHYDQALACNLEGLWFEVHPENYMVGGPRLAWLNRIAERHPVSLHGVALSLAADAAPDQDHLQRLRALCDQIEPVLVSEHLAWSTWQGHYHPDLLPFPRSNEALQRIAENIQRCQEVLGRRISIENPSHYLQLQGHEWDEIDFLGELTRRTGCGLLLDINNVYVSAHNLGFSATAYLDRFPAQAITEVHLAGHSDDDQGSLLIDSHDAQVAEPVWALYRKLVSRVGPRPTLIERDDKLPPFTELLAERSIAQSIMTCPGVLP.

The protein belongs to the UPF0276 family.

In Pseudomonas putida (strain ATCC 47054 / DSM 6125 / CFBP 8728 / NCIMB 11950 / KT2440), this protein is UPF0276 protein PP_0992.